The primary structure comprises 598 residues: Aspartate--tRNA(Asp/Asn) ligase (598 aa).

An L-aspartate-binding site is contributed by Glu172. The segment at 196–199 is aspartate; that stretch reads QLFK. Arg218 contacts L-aspartate. Residues 218 to 220 and Gln227 contribute to the ATP site; that span reads RDE. His455 contacts L-aspartate. Glu489 is an ATP binding site. Arg496 contributes to the L-aspartate binding site. ATP is bound at residue 541 to 544; that stretch reads GLDR.

The protein belongs to the class-II aminoacyl-tRNA synthetase family. Type 1 subfamily. Homodimer.

It localises to the cytoplasm. The catalysed reaction is tRNA(Asx) + L-aspartate + ATP = L-aspartyl-tRNA(Asx) + AMP + diphosphate. Aspartyl-tRNA synthetase with relaxed tRNA specificity since it is able to aspartylate not only its cognate tRNA(Asp) but also tRNA(Asn). Reaction proceeds in two steps: L-aspartate is first activated by ATP to form Asp-AMP and then transferred to the acceptor end of tRNA(Asp/Asn). The polypeptide is Aspartate--tRNA(Asp/Asn) ligase (Burkholderia mallei (strain ATCC 23344)).